Reading from the N-terminus, the 566-residue chain is Proline--tRNA ligase (566 aa).

It belongs to the class-II aminoacyl-tRNA synthetase family. ProS type 1 subfamily. In terms of assembly, homodimer.

The protein resides in the cytoplasm. It carries out the reaction tRNA(Pro) + L-proline + ATP = L-prolyl-tRNA(Pro) + AMP + diphosphate. In terms of biological role, catalyzes the attachment of proline to tRNA(Pro) in a two-step reaction: proline is first activated by ATP to form Pro-AMP and then transferred to the acceptor end of tRNA(Pro). As ProRS can inadvertently accommodate and process non-cognate amino acids such as alanine and cysteine, to avoid such errors it has two additional distinct editing activities against alanine. One activity is designated as 'pretransfer' editing and involves the tRNA(Pro)-independent hydrolysis of activated Ala-AMP. The other activity is designated 'posttransfer' editing and involves deacylation of mischarged Ala-tRNA(Pro). The misacylated Cys-tRNA(Pro) is not edited by ProRS. The sequence is that of Proline--tRNA ligase from Staphylococcus haemolyticus (strain JCSC1435).